The primary structure comprises 262 residues: NADPH-dependent 7-cyano-7-deazaguanine reductase (262 aa).

69 to 71 (IES) serves as a coordination point for substrate. Residue 71-72 (SK) coordinates NADPH. The active-site Thioimide intermediate is C170. D177 acts as the Proton donor in catalysis. Residue 209–210 (HE) coordinates substrate. 238–239 (RG) contributes to the NADPH binding site.

It belongs to the GTP cyclohydrolase I family. QueF type 2 subfamily. As to quaternary structure, homodimer.

The protein localises to the cytoplasm. It carries out the reaction 7-aminomethyl-7-carbaguanine + 2 NADP(+) = 7-cyano-7-deazaguanine + 2 NADPH + 3 H(+). It participates in tRNA modification; tRNA-queuosine biosynthesis. Catalyzes the NADPH-dependent reduction of 7-cyano-7-deazaguanine (preQ0) to 7-aminomethyl-7-deazaguanine (preQ1). This Buchnera aphidicola subsp. Schizaphis graminum (strain Sg) protein is NADPH-dependent 7-cyano-7-deazaguanine reductase.